A 1101-amino-acid chain; its full sequence is Isoleucine--tRNA ligase (1101 aa).

The short motif at 50-60 is the 'HIGH' region element; sequence PFANGLPHYGH. The 'KMSKS' region signature appears at 629-633; that stretch reads KLSKR. Lysine 632 contacts ATP.

The protein belongs to the class-I aminoacyl-tRNA synthetase family. IleS type 2 subfamily. As to quaternary structure, monomer. Requires Zn(2+) as cofactor.

It is found in the cytoplasm. The catalysed reaction is tRNA(Ile) + L-isoleucine + ATP = L-isoleucyl-tRNA(Ile) + AMP + diphosphate. Functionally, catalyzes the attachment of isoleucine to tRNA(Ile). As IleRS can inadvertently accommodate and process structurally similar amino acids such as valine, to avoid such errors it has two additional distinct tRNA(Ile)-dependent editing activities. One activity is designated as 'pretransfer' editing and involves the hydrolysis of activated Val-AMP. The other activity is designated 'posttransfer' editing and involves deacylation of mischarged Val-tRNA(Ile). The polypeptide is Isoleucine--tRNA ligase (Anaplasma marginale (strain St. Maries)).